The sequence spans 251 residues: Chlorophyll a-b binding protein 4, chloroplastic (251 aa).

The residue at position 35 (Ser-35) is a Phosphoserine. Chlorophyll b is bound at residue Trp-57. Chlorophyll a contacts are provided by Phe-77 and Glu-96. Residue Arg-101 coordinates chlorophyll b. 2 helical membrane passes run 102–122 (WAML…IGII) and 135–155 (YFAS…YVEI). Residues Ser-138, Val-144, Glu-154, and Arg-157 each coordinate chlorophyll b. 6 residues coordinate chlorophyll a: Lys-204, Glu-205, Asn-208, Arg-210, Gln-222, and His-237.

Belongs to the light-harvesting chlorophyll a/b-binding (LHC) protein family. In terms of assembly, the LHC complex consists of chlorophyll a-b binding proteins. Red-emitting heterodimer with LHCA1. It depends on Binds at least 14 chlorophylls (8 Chl-a and 6 Chl-b) and carotenoids such as lutein and neoxanthin. as a cofactor. In terms of processing, photoregulated by reversible phosphorylation of its threonine residues.

It is found in the plastid. The protein localises to the chloroplast thylakoid membrane. In terms of biological role, the light-harvesting complex (LHC) functions as a light receptor, it captures and delivers excitation energy to photosystems with which it is closely associated. The sequence is that of Chlorophyll a-b binding protein 4, chloroplastic from Arabidopsis thaliana (Mouse-ear cress).